Reading from the N-terminus, the 385-residue chain is ATP phosphoribosyltransferase regulatory subunit (385 aa).

It belongs to the class-II aminoacyl-tRNA synthetase family. HisZ subfamily. Heteromultimer composed of HisG and HisZ subunits.

Its subcellular location is the cytoplasm. Its pathway is amino-acid biosynthesis; L-histidine biosynthesis; L-histidine from 5-phospho-alpha-D-ribose 1-diphosphate: step 1/9. In terms of biological role, required for the first step of histidine biosynthesis. May allow the feedback regulation of ATP phosphoribosyltransferase activity by histidine. The chain is ATP phosphoribosyltransferase regulatory subunit from Lysinibacillus sphaericus (strain C3-41).